Consider the following 538-residue polypeptide: Mitochondria-eating protein (538 aa).

The tract at residues 1 to 273 (MAENLKRLVS…PRSRSCSRSR (273 aa)) is interaction with YWHAG/14-3-3 protein gamma. Serine 85 bears the Phosphoserine mark. The segment at 92 to 137 (GKPVDSKVPSLQNTFDRERRKDPSPRDRDMQQLDSNLNSTRSQLNQ) is disordered. The segment covering 106-122 (FDRERRKDPSPRDRDMQ) has biased composition (basic and acidic residues). Coiled-coil stretches lie at residues 118 to 186 (DRDM…ARHR) and 220 to 256 (QRDT…RSSR). The segment covering 123–137 (QLDSNLNSTRSQLNQ) has biased composition (polar residues). Residues serine 156 and serine 159 each carry the phosphoserine modification. Disordered regions lie at residues 174–227 (LKTL…EVTS) and 247–292 (KSAL…NRSK). 2 stretches are compositionally biased toward basic and acidic residues: residues 181–209 (EDAR…RRCE) and 216–227 (RNADQRDTEVTS). Over residues 253–278 (RSSRSRSPSPAPRSRSCSRSRSASPS) the composition is skewed to low complexity. Serine 285, serine 287, and serine 509 each carry phosphoserine.

It belongs to the MIEAP family. In terms of assembly, interacts (via coiled-coil domains) with BNIP3L (via BH3 domain). Interacts (via coiled-coil domains) with BNIP3 (via BH3 domain). Interacts with YWHAG/14-3-3 protein gamma; a protein that also plays a role in MALM.

The protein resides in the cytoplasm. The protein localises to the cytosol. Its subcellular location is the mitochondrion outer membrane. It localises to the mitochondrion matrix. Key regulator of mitochondrial quality that mediates the repairing or degradation of unhealthy mitochondria in response to mitochondrial damage. Mediator of mitochondrial protein catabolic process (also named MALM) by mediating the degradation of damaged proteins inside mitochondria by promoting the accumulation in the mitochondrial matrix of hydrolases that are characteristic of the lysosomal lumen. Also involved in mitochondrion degradation of damaged mitochondria by promoting the formation of vacuole-like structures (named MIV), which engulf and degrade unhealthy mitochondria by accumulating lysosomes. The physical interaction of SPATA18/MIEAP, BNIP3 and BNIP3L/NIX at the mitochondrial outer membrane regulates the opening of a pore in the mitochondrial double membrane in order to mediate the translocation of lysosomal proteins from the cytoplasm to the mitochondrial matrix. Binds cardiolipin. May form molecular condensates (non-membrane-bounded organelles) within mitochondria that compartmentalize and promote cardiolipin metabolism. In Macaca fascicularis (Crab-eating macaque), this protein is Mitochondria-eating protein (SPATA18).